The following is a 250-amino-acid chain: PTB-containing, cubilin and LRP1-interacting protein (250 aa).

The region spanning 93–250 (VTYLGKVSTT…VSQELESDDG (158 aa)) is the PID domain. Residues 229-250 (DGRIHSNSSSEEVSQELESDDG) form a disordered region. Phosphoserine is present on residues Ser236 and Ser247. Positions 241 to 250 (VSQELESDDG) are enriched in acidic residues.

As to quaternary structure, found in a complex with PID1/PCLI1, LRP1 and CUBNI. Interacts with LRP1 and CUBN. Expressed in subcutaneous fat, heart, skeletal muscle, brain, colon, thymus, spleen, kidney, liver, small intestine, placenta, lung and peripheral blood leukocyte.

It is found in the cytoplasm. In terms of biological role, increases proliferation of preadipocytes without affecting adipocytic differentiation. The sequence is that of PTB-containing, cubilin and LRP1-interacting protein (PID1) from Homo sapiens (Human).